The primary structure comprises 345 residues: N-acetyl-gamma-glutamyl-phosphate reductase (345 aa).

Cysteine 149 is an active-site residue.

Belongs to the NAGSA dehydrogenase family. Type 1 subfamily.

The protein localises to the cytoplasm. The catalysed reaction is N-acetyl-L-glutamate 5-semialdehyde + phosphate + NADP(+) = N-acetyl-L-glutamyl 5-phosphate + NADPH + H(+). It functions in the pathway amino-acid biosynthesis; L-arginine biosynthesis; N(2)-acetyl-L-ornithine from L-glutamate: step 3/4. Catalyzes the NADPH-dependent reduction of N-acetyl-5-glutamyl phosphate to yield N-acetyl-L-glutamate 5-semialdehyde. This is N-acetyl-gamma-glutamyl-phosphate reductase from Bacillus cereus (strain B4264).